A 194-amino-acid chain; its full sequence is Endo-1,4-beta-xylanase (194 aa).

The residue at position 1 (Gly-1) is an N-acetylglycine. One can recognise a GH11 domain in the interval 1-191 (GTTPNSEGWH…SSGYARITVA (191 aa)). Catalysis depends on Glu-86, which acts as the Nucleophile. Residues Cys-110 and Cys-154 are joined by a disulfide bond. The Proton donor role is filled by Glu-178.

It belongs to the glycosyl hydrolase 11 (cellulase G) family.

The catalysed reaction is Endohydrolysis of (1-&gt;4)-beta-D-xylosidic linkages in xylans.. Its pathway is glycan degradation; xylan degradation. This is Endo-1,4-beta-xylanase from Byssochlamys spectabilis (Paecilomyces variotii).